We begin with the raw amino-acid sequence, 259 residues long: Deoxyribose-phosphate aldolase (259 aa).

The active-site Proton donor/acceptor is the Asp102. The Schiff-base intermediate with acetaldehyde role is filled by Lys167. The active-site Proton donor/acceptor is the Lys201.

This sequence belongs to the DeoC/FbaB aldolase family. DeoC type 2 subfamily.

The protein resides in the cytoplasm. The catalysed reaction is 2-deoxy-D-ribose 5-phosphate = D-glyceraldehyde 3-phosphate + acetaldehyde. Its pathway is carbohydrate degradation; 2-deoxy-D-ribose 1-phosphate degradation; D-glyceraldehyde 3-phosphate and acetaldehyde from 2-deoxy-alpha-D-ribose 1-phosphate: step 2/2. Its function is as follows. Catalyzes a reversible aldol reaction between acetaldehyde and D-glyceraldehyde 3-phosphate to generate 2-deoxy-D-ribose 5-phosphate. The polypeptide is Deoxyribose-phosphate aldolase (Escherichia fergusonii (strain ATCC 35469 / DSM 13698 / CCUG 18766 / IAM 14443 / JCM 21226 / LMG 7866 / NBRC 102419 / NCTC 12128 / CDC 0568-73)).